The chain runs to 477 residues: Aspartyl/glutamyl-tRNA(Asn/Gln) amidotransferase subunit B (477 aa).

This sequence belongs to the GatB/GatE family. GatB subfamily. In terms of assembly, heterotrimer of A, B and C subunits.

It carries out the reaction L-glutamyl-tRNA(Gln) + L-glutamine + ATP + H2O = L-glutaminyl-tRNA(Gln) + L-glutamate + ADP + phosphate + H(+). The catalysed reaction is L-aspartyl-tRNA(Asn) + L-glutamine + ATP + H2O = L-asparaginyl-tRNA(Asn) + L-glutamate + ADP + phosphate + 2 H(+). Its function is as follows. Allows the formation of correctly charged Asn-tRNA(Asn) or Gln-tRNA(Gln) through the transamidation of misacylated Asp-tRNA(Asn) or Glu-tRNA(Gln) in organisms which lack either or both of asparaginyl-tRNA or glutaminyl-tRNA synthetases. The reaction takes place in the presence of glutamine and ATP through an activated phospho-Asp-tRNA(Asn) or phospho-Glu-tRNA(Gln). This Lawsonia intracellularis (strain PHE/MN1-00) protein is Aspartyl/glutamyl-tRNA(Asn/Gln) amidotransferase subunit B.